The sequence spans 488 residues: Coagulation factor X (488 aa).

Residues 1–31 form the signal peptide; that stretch reads MGRPLHLVLLSASLAGLLLLGESLFIRREQA. Positions 32–40 are excised as a propeptide; it reads NNILARVTR. Residues 41-85 enclose the Gla domain; it reads ANSFLEEMKKGHLERECMEETCSYEEAREVFEDSDKTNEFWNKYK. E46, E47, E54, E56, E59, E60, E65, E66, E69, E72, and E79 each carry 4-carboxyglutamate. C57 and C62 are disulfide-bonded. Residues 86 to 122 form the EGF-like 1; calcium-binding domain; it reads DGDQCETSPCQNQGKCKDGLGEYTCTCLEGFEGKNCE. Cystine bridges form between C90–C101, C95–C110, C112–C121, C129–C140, C136–C149, C151–C164, C172–C342, C241–C246, C261–C277, C390–C404, and C415–C443. Residue D103 is modified to (3R)-3-hydroxyaspartate. An EGF-like 2 domain is found at 125 to 165; sequence TRKLCSLDNGDCDQFCHEEQNSVVCSCARGYTLADNGKACI. Positions 183 to 203 are O-glycosylated at one site; the sequence is SVAQATSSSGEAPDSITWKPY. A propeptide spans 183–234 (activation peptide); sequence SVAQATSSSGEAPDSITWKPYDAADLDPTENPFDLLDFNQTQPERGDNNLTR. Residues T199 and T211 are each glycosylated (O-linked (GalNAc...) threonine). Residues N221 and N231 are each glycosylated (N-linked (GlcNAc...) asparagine). The Peptidase S1 domain maps to 235–467; sequence IVGGQECKDG…FLKWIDRSMK (233 aa). Residues H276 and D322 each act as charge relay system in the active site. S419 functions as the Charge relay system in the catalytic mechanism. The interval 476 to 485 is O-glycosylated at one site; sequence SHAPEVITSS.

It belongs to the peptidase S1 family. As to quaternary structure, the two chains are formed from a single-chain precursor by the excision of two Arg residues and are held together by 1 or more disulfide bonds. Forms a heterodimer with SERPINA5. Interacts (inactive and activated) with ixolaris, an anticoagulant protein from Ixodes scapularis saliva. Interacts (activated) with iripin-8, a serine protease inhibitor from Ixodes ricinus saliva. Interacts (activated) with FXa-directed anticoagulant from Aedes albopictus saliva. Interacts (activated) with guianensin, an anticoagulant protein from Simulium guianense saliva. Interacts (activated) with simukunin, an anticoagulant protein from Simulium vittatum saliva. In terms of processing, the vitamin K-dependent, enzymatic carboxylation of some glutamate residues allows the modified protein to bind calcium. Post-translationally, N- and O-glycosylated. O-glycosylated with core 1 or possibly core 8 glycans. Proteolytically cleaved and activated by cathepsin CTSG. The activation peptide is cleaved by factor IXa (in the intrinsic pathway), or by factor VIIa (in the extrinsic pathway). In terms of processing, the iron and 2-oxoglutarate dependent 3-hydroxylation of aspartate and asparagine is (R) stereospecific within EGF domains. In terms of tissue distribution, plasma; synthesized in the liver.

It is found in the secreted. The enzyme catalyses Selective cleavage of Arg-|-Thr and then Arg-|-Ile bonds in prothrombin to form thrombin.. Its activity is regulated as follows. Inhibited by SERPINA5 and SERPINA10. Its function is as follows. Factor Xa is a vitamin K-dependent glycoprotein that converts prothrombin to thrombin in the presence of factor Va, calcium and phospholipid during blood clotting. Factor Xa activates pro-inflammatory signaling pathways in a protease-activated receptor (PAR)-dependent manner. Up-regulates expression of protease-activated receptors (PARs) F2R, F2RL1 and F2RL2 in dermal microvascular endothelial cells. Triggers the production of pro-inflammatory cytokines, such as MCP-1/CCL2 and IL6, in cardiac fibroblasts and umbilical vein endothelial cells in PAR-1/F2R-dependent manner. Triggers the production of pro-inflammatory cytokines, such as MCP-1/CCL2, IL6, TNF-alpha/TNF, IL-1beta/IL1B, IL8/CXCL8 and IL18, in endothelial cells and atrial tissues. Induces expression of adhesion molecules, such as ICAM1, VCAM1 and SELE, in endothelial cells and atrial tissues. Increases expression of phosphorylated ERK1/2 in dermal microvascular endothelial cells and atrial tissues. Triggers activation of the transcription factor NF-kappa-B in dermal microvascular endothelial cells and atrial tissues. Activates pro-inflammatory and pro-fibrotic responses in dermal fibroblasts and enhances wound healing probably via PAR-2/F2RL1-dependent mechanism. Activates barrier protective signaling responses in endothelial cells in PAR-2/F2RL1-dependent manner; the activity depends on the cleavage of PAR-2/F2RL1 by factor Xa. Up-regulates expression of plasminogen activator inhibitor 1 (SERPINE1) in atrial tissues. The sequence is that of Coagulation factor X (F10) from Homo sapiens (Human).